The primary structure comprises 253 residues: MIIAVSGKGGVGKTAFTTLLIKALSKKTNSILVVDADPDSNLPETLGVEVEKTVGDIREELKKLVERDEIPAGMTKLDYLRSKIFEILVETKYYDLLVMGRPEGSGCYCSVNNWLRQIIDNLAKDYEFVVIDTEAGLEHLSRRTTQNVDVMIVITDASKRGLGTAKRIKKLANELEVKFKDIYVVANKVKPEYEELIDNYAKELGLNLIGKLPYNKEIAEYDLKGIPLWNLPENNEVYKKVEEIAEKIINKKF.

7–14 is a binding site for ATP; the sequence is GKGGVGKT.

The protein to M.jannaschii MJ0084 and MJ0823.

This is an uncharacterized protein from Methanocaldococcus jannaschii (strain ATCC 43067 / DSM 2661 / JAL-1 / JCM 10045 / NBRC 100440) (Methanococcus jannaschii).